The chain runs to 206 residues: TPR repeat-containing protein YrrB (206 aa).

6 TPR repeats span residues 1 to 23 (MQEGDYEKAAEAFTKAIEENKED), 24 to 57 (AIPYINFANLLSSVNELERALAFYDKALELDSSA), 59 to 91 (TAYYGAGNVYVVKEMYKEAKDMFEKALRAGMEN), 93 to 125 (DLFYMLGTVLVKLEQPKLALPYLQRAVELNEND), 127 to 159 (EARFQFGMCLANEGMLDEALSQFAAVTEQDPGH), and 160 to 193 (ADAFYNAGVTYAYKENREKALEMLDKAIDIQPDH).

In terms of assembly, monomer.

Its function is as follows. Could be an interacting mediator in the complex formation among RNA sulfuration components, RNA processing components, and aminoacyl-tRNA synthetases. This chain is TPR repeat-containing protein YrrB (yrrB), found in Bacillus subtilis (strain 168).